The chain runs to 415 residues: Imidazolonepropionase (415 aa).

H76 and H78 together coordinate Fe(3+). Positions 76 and 78 each coordinate Zn(2+). R85, Y148, and H181 together coordinate 4-imidazolone-5-propanoate. Y148 serves as a coordination point for N-formimidoyl-L-glutamate. Fe(3+) is bound at residue H246. H246 contributes to the Zn(2+) binding site. Residue E249 participates in 4-imidazolone-5-propanoate binding. Residue D320 participates in Fe(3+) binding. D320 is a binding site for Zn(2+). Positions 322 and 324 each coordinate N-formimidoyl-L-glutamate. 4-imidazolone-5-propanoate is bound at residue T325.

It belongs to the metallo-dependent hydrolases superfamily. HutI family. It depends on Zn(2+) as a cofactor. Requires Fe(3+) as cofactor.

The protein resides in the cytoplasm. It carries out the reaction 4-imidazolone-5-propanoate + H2O = N-formimidoyl-L-glutamate. The protein operates within amino-acid degradation; L-histidine degradation into L-glutamate; N-formimidoyl-L-glutamate from L-histidine: step 3/3. Its function is as follows. Catalyzes the hydrolytic cleavage of the carbon-nitrogen bond in imidazolone-5-propanoate to yield N-formimidoyl-L-glutamate. It is the third step in the universal histidine degradation pathway. The polypeptide is Imidazolonepropionase (Thermoanaerobacter pseudethanolicus (strain ATCC 33223 / 39E) (Clostridium thermohydrosulfuricum)).